A 264-amino-acid chain; its full sequence is uncharacterized protein (264 aa).

3 stretches are compositionally biased toward polar residues: residues 1-18 (MFEN…SSRS), 73-83 (SLGSVGTTEVN), and 126-139 (KTTQ…QPVL). 2 disordered regions span residues 1–47 (MFEN…WVGS) and 68–264 (RKEP…LSFE). The segment covering 149–171 (SSGQPQVSSSAQPSPADASQPEA) has biased composition (low complexity). Over residues 194-212 (LIHKDGQDDPKLKVTECRR) the composition is skewed to basic and acidic residues. Phosphoserine occurs at positions 214, 215, 241, and 250.

This is an uncharacterized protein from Bos taurus (Bovine).